The sequence spans 866 residues: Scm-like with four MBT domains protein 1 (866 aa).

MBT repeat units lie at residues 20–120 (LSWE…LEAP), 128–232 (SDWD…LQPP), 242–348 (AEWQ…ISPP), and 356–453 (FDWA…LSTP). Positions 34–42 (VPYGSFKHV) are antigenic epitope. Positions 641 to 777 (KKKNKRIGRP…DDENKPPSPK (137 aa)) are disordered. The span at 663-682 (KASKRRKRRKNVFVHKKKRS) shows a compositional bias: basic residues. Over residues 683–694 (SASVDNTPAGSP) the composition is skewed to polar residues. 2 stretches are compositionally biased toward acidic residues: residues 699-713 (GEDEDDPDEGDDDSL) and 721-730 (QQDELQEESE). The segment covering 737 to 749 (CSSSPTQSEISTS) has biased composition (low complexity). Phosphoserine is present on residues Ser-767 and Ser-775. Positions 796–864 (WSVADVVRFI…RIKFAFYEQF (69 aa)) constitute an SAM domain.

As to quaternary structure, interacts with MYOD1. Component of the SLC (SFMBT1-LSD1-CoREST) corepressor complex, which also contains KDM1A/LSD1 and RCOR1/CoREST. Interacts with KDM1A/LSD1 and RCOR1/CoREST. Interacts with L3MBTL3. As to expression, expressed in all cell lines and normal tissues tested, including the thymus.

Its subcellular location is the nucleus. In terms of biological role, histone-binding protein, which is part of various corepressor complexes. Mediates the recruitment of corepressor complexes to target genes, followed by chromatin compaction and repression of transcription. Plays a role during myogenesis: required for the maintenance of undifferentiated states of myogenic progenitor cells via interaction with MYOD1. Interaction with MYOD1 leads to the recruitment of associated corepressors and silencing of MYOD1 target genes. Part of the SLC complex in germ cells, where it may play a role during spermatogenesis. The sequence is that of Scm-like with four MBT domains protein 1 (SFMBT1) from Homo sapiens (Human).